The primary structure comprises 203 residues: Protein shisa-like-1a (203 aa).

An N-terminal signal peptide occupies residues 1–25; the sequence is MIMNGRWSFNTLAIIFILLSTAALS. At 26-97 the chain is on the extracellular side; sequence AHFRVCEPYS…SDSFAHNNYT (72 aa). Residues N53, N63, N72, N83, and N95 are each glycosylated (N-linked (GlcNAc...) asparagine). Residues 98 to 118 traverse the membrane as a helical segment; it reads ALIGVWIYGFFVMVLLALDFL. Topologically, residues 119-203 are cytoplasmic; sequence YYSAMNYELC…LLSFQTSTAW (85 aa). Residues 157 to 191 form a disordered region; the sequence is ELNTGPGLSQQQQLHLHHHHHHHHPRHSLRGDTQS. Residues 161–170 are compositionally biased toward low complexity; sequence GPGLSQQQQL. The segment covering 171 to 184 has biased composition (basic residues); the sequence is HLHHHHHHHHPRHS.

This sequence belongs to the shisa family.

Its subcellular location is the membrane. The protein is Protein shisa-like-1a (shisal1a) of Danio rerio (Zebrafish).